Here is a 190-residue protein sequence, read N- to C-terminus: uncharacterized protein (190 aa).

This is an uncharacterized protein from Borreliella burgdorferi (strain ATCC 35210 / DSM 4680 / CIP 102532 / B31) (Borrelia burgdorferi).